Reading from the N-terminus, the 602-residue chain is Aspartate--tRNA(Asp/Asn) ligase (602 aa).

Glu-177 lines the L-aspartate pocket. An aspartate region spans residues Gln-201 to Lys-204. Arg-223 serves as a coordination point for L-aspartate. ATP contacts are provided by residues Arg-223 to Glu-225 and Gln-232. His-460 provides a ligand contact to L-aspartate. Glu-497 contributes to the ATP binding site. Arg-504 lines the L-aspartate pocket. Gly-549 to Arg-552 is an ATP binding site.

Belongs to the class-II aminoacyl-tRNA synthetase family. Type 1 subfamily. Homodimer.

The protein localises to the cytoplasm. The catalysed reaction is tRNA(Asx) + L-aspartate + ATP = L-aspartyl-tRNA(Asx) + AMP + diphosphate. Functionally, aspartyl-tRNA synthetase with relaxed tRNA specificity since it is able to aspartylate not only its cognate tRNA(Asp) but also tRNA(Asn). Reaction proceeds in two steps: L-aspartate is first activated by ATP to form Asp-AMP and then transferred to the acceptor end of tRNA(Asp/Asn). This Prochlorococcus marinus (strain MIT 9515) protein is Aspartate--tRNA(Asp/Asn) ligase.